The primary structure comprises 218 residues: MDKSDSASAGRNRRRRPRRGSRSASSSADVNFRVLSQQLSRLNKTLAAGRPTINHPTFVGSERCKPGYTFTSITLRPPKIDRGSYYGKRLFLPESVTEFDKKLVSRIQIRVNPLPKFDSTVWVTVRKVPASSDLSVAAISTMFADGASPVLVYQYAASGVQANNKLLYDLSPMRADIGDMRKYAVLVYSKDDALESDELVLHVDIEHQRIPTSGVLPV.

Met-1 is subject to N-acetylmethionine; by host. Residues 1–10 (MDKSDSASAG) are compositionally biased toward low complexity. The disordered stretch occupies residues 1 to 28 (MDKSDSASAGRNRRRRPRRGSRSASSSA). The span at 11 to 21 (RNRRRRPRRGS) shows a compositional bias: basic residues.

It belongs to the cucumovirus capsid protein family.

It is found in the virion. Capsid protein. Probably binds RNA and plays a role in packaging. The protein is Capsid protein of Cucumber mosaic virus (strain M48) (CMV).